The primary structure comprises 69 residues: Sodium channel toxin (69 aa).

The LCN-type CS-alpha/beta domain occupies 2-66; sequence KNDYPVDTAK…SPTKTSGRCN (65 aa). 4 disulfide bridges follow: cysteine 14/cysteine 65, cysteine 18/cysteine 41, cysteine 27/cysteine 48, and cysteine 31/cysteine 50.

This sequence belongs to the long (4 C-C) scorpion toxin superfamily. Sodium channel inhibitor family. As to expression, expressed by the venom gland.

It is found in the secreted. Functionally, inhibits voltage-gated sodium channels (Nav). This is Sodium channel toxin from Tityus metuendus (Scorpion).